Reading from the N-terminus, the 65-residue chain is Large ribosomal subunit protein bL35 (65 aa).

It belongs to the bacterial ribosomal protein bL35 family.

This is Large ribosomal subunit protein bL35 from Aeromonas salmonicida (strain A449).